The sequence spans 408 residues: RNA exonuclease 4 (408 aa).

The disordered stretch occupies residues 27 to 70 (TKEKDVSNSKAHNSRSSQSPSSSLRSSSRIQRKSKHSQGVGQYM). The span at 40–55 (SRSSQSPSSSLRSSSR) shows a compositional bias: low complexity. The 162-residue stretch at 131–292 (QYLAIDCEMV…YRLHKKEWER (162 aa)) folds into the Exonuclease domain. The span at 310–322 (PEHVLGKRGHDEK) shows a compositional bias: basic and acidic residues. Residues 310–408 (PEHVLGKRGH…GESWWEQPAA (99 aa)) are disordered. A compositionally biased stretch (gly residues) spans 343–357 (GNGGGRQQFPGGGRK). The segment covering 372–384 (QRVDENGRGDGTS) has biased composition (basic and acidic residues).

Belongs to the REXO4 family.

The protein resides in the nucleus. Functionally, exoribonuclease involved in ribosome biosynthesis. Involved in the processing of ITS1, the internal transcribed spacer localized between the 18S and 5.8S rRNAs. This chain is RNA exonuclease 4 (REX4), found in Cryptococcus neoformans var. neoformans serotype D (strain B-3501A) (Filobasidiella neoformans).